A 371-amino-acid chain; its full sequence is tRNA-specific 2-thiouridylase MnmA (371 aa).

ATP contacts are provided by residues Gly13 to Ser20 and Met39. The segment at Asn99 to Asp101 is interaction with target base in tRNA. Cys104 functions as the Nucleophile in the catalytic mechanism. Cys104 and Cys200 are disulfide-bonded. ATP is bound at residue Gly128. The interval Lys150–Gln152 is interaction with tRNA. Cys200 acts as the Cysteine persulfide intermediate in catalysis. An interaction with tRNA region spans residues Arg308 to Tyr309.

This sequence belongs to the MnmA/TRMU family.

The protein localises to the cytoplasm. It catalyses the reaction S-sulfanyl-L-cysteinyl-[protein] + uridine(34) in tRNA + AH2 + ATP = 2-thiouridine(34) in tRNA + L-cysteinyl-[protein] + A + AMP + diphosphate + H(+). Functionally, catalyzes the 2-thiolation of uridine at the wobble position (U34) of tRNA, leading to the formation of s(2)U34. The sequence is that of tRNA-specific 2-thiouridylase MnmA from Bacillus mycoides (strain KBAB4) (Bacillus weihenstephanensis).